We begin with the raw amino-acid sequence, 406 residues long: DNA primase DnaG (406 aa).

The region spanning 169–247 is the Toprim domain; it reads PNLIIVEGRA…KIDFVARAPI (79 aa). Mg(2+) contacts are provided by Glu175, Asp220, and Asp222.

Belongs to the archaeal DnaG primase family. In terms of assembly, forms a ternary complex with MCM helicase and DNA. Component of the archaeal exosome complex. Interacts with Csl4 but not with Rrp4. The cofactor is Mg(2+).

It catalyses the reaction ssDNA + n NTP = ssDNA/pppN(pN)n-1 hybrid + (n-1) diphosphate.. Its function is as follows. RNA polymerase that catalyzes the synthesis of short RNA molecules used as primers for DNA polymerase during DNA replication. Can use NTPs but not dNTPs. Binds DNA. Also part of the exosome, which is a complex involved in RNA degradation. Acts as a poly(A)-binding protein that enhances the interaction between heteromeric, adenine-rich transcripts and the exosome. In Saccharolobus solfataricus (strain ATCC 35092 / DSM 1617 / JCM 11322 / P2) (Sulfolobus solfataricus), this protein is DNA primase DnaG.